A 231-amino-acid chain; its full sequence is Ribonuclease 3 (231 aa).

One can recognise an RNase III domain in the interval 8–135 (VGDLERRIGH…LMAALYQDGG (128 aa)). Glutamate 48 is a Mg(2+) binding site. Active-site residues include aspartate 52 and glutamate 124. Residue glutamate 124 coordinates Mg(2+). In terms of domain architecture, DRBM spans 161–230 (DPKTALQEWA…AKALLEREGA (70 aa)). The interval 210-231 (GKSRQEAEKAAAKALLEREGAG) is disordered. Over residues 212–231 (SRQEAEKAAAKALLEREGAG) the composition is skewed to basic and acidic residues.

It belongs to the ribonuclease III family. As to quaternary structure, homodimer. The cofactor is Mg(2+).

It is found in the cytoplasm. It catalyses the reaction Endonucleolytic cleavage to 5'-phosphomonoester.. Digests double-stranded RNA. Involved in the processing of primary rRNA transcript to yield the immediate precursors to the large and small rRNAs (23S and 16S). Processes some mRNAs, and tRNAs when they are encoded in the rRNA operon. Processes pre-crRNA and tracrRNA of type II CRISPR loci if present in the organism. The sequence is that of Ribonuclease 3 from Caulobacter vibrioides (strain ATCC 19089 / CIP 103742 / CB 15) (Caulobacter crescentus).